The following is a 125-amino-acid chain: Small ribosomal subunit protein bS6 (125 aa).

A disordered region spans residues 96 to 125 (VTEASPMKAAKEERKPLAEVENNDFEDAEE). Over residues 104–113 (AAKEERKPLA) the composition is skewed to basic and acidic residues. Positions 116 to 125 (ENNDFEDAEE) are enriched in acidic residues.

The protein belongs to the bacterial ribosomal protein bS6 family.

In terms of biological role, binds together with bS18 to 16S ribosomal RNA. This is Small ribosomal subunit protein bS6 from Haemophilus influenzae (strain 86-028NP).